A 319-amino-acid polypeptide reads, in one-letter code: Ninja-family protein Os07g0602900 (319 aa).

3 disordered regions span residues 1–26, 69–152, and 181–234; these read MAAS…EKGG, LPGG…DAMY, and AEAM…LTMR. A compositionally biased stretch (gly residues) spans 70-79; it reads PGGGGGGAGG. Residues 105–118 are compositionally biased toward basic and acidic residues; it reads ERWRRREMQSLKRL. Residues 185–196 show a composition bias toward polar residues; the sequence is DTSSSDNASCQN. Over residues 225 to 234 the composition is skewed to low complexity; that stretch reads LRTLRSLTMR.

The protein belongs to the Ninja family.

The protein localises to the nucleus. The protein is Ninja-family protein Os07g0602900 of Oryza sativa subsp. japonica (Rice).